Here is a 66-residue protein sequence, read N- to C-terminus: Ribosome biogenesis protein Nop10 (66 aa).

The protein belongs to the NOP10 family.

Its function is as follows. Involved in ribosome biogenesis; more specifically in 18S rRNA pseudouridylation and in cleavage of pre-rRNA. This chain is Ribosome biogenesis protein Nop10, found in Staphylothermus marinus (strain ATCC 43588 / DSM 3639 / JCM 9404 / F1).